We begin with the raw amino-acid sequence, 449 residues long: Signal recognition particle protein (449 aa).

Residues 109 to 116, 191 to 195, and 249 to 252 contribute to the GTP site; these read GLQGSGKT, DTAGR, and SRID.

This sequence belongs to the GTP-binding SRP family. SRP54 subfamily. As to quaternary structure, part of the signal recognition particle protein translocation system, which is composed of SRP and FtsY. SRP is a ribonucleoprotein composed of Ffh and a 4.5S RNA molecule.

It localises to the cytoplasm. It carries out the reaction GTP + H2O = GDP + phosphate + H(+). Involved in targeting and insertion of nascent membrane proteins into the cytoplasmic membrane. Binds to the hydrophobic signal sequence of the ribosome-nascent chain (RNC) as it emerges from the ribosomes. The SRP-RNC complex is then targeted to the cytoplasmic membrane where it interacts with the SRP receptor FtsY. Interaction with FtsY leads to the transfer of the RNC complex to the Sec translocase for insertion into the membrane, the hydrolysis of GTP by both Ffh and FtsY, and the dissociation of the SRP-FtsY complex into the individual components. This chain is Signal recognition particle protein, found in Rickettsia bellii (strain RML369-C).